We begin with the raw amino-acid sequence, 371 residues long: Opsin Rh1 (371 aa).

The Extracellular portion of the chain corresponds to 1–47; the sequence is MERYSTPLIGPSFAALTNGSVTDKVTPDMAHLVHPYWNQFPAMEPKW. An N-linked (GlcNAc...) asparagine glycan is attached at Asn18. The helical transmembrane segment at 48–72 threads the bilayer; that stretch reads AKFLAAYMVLIATISWCGNGVVIYI. At 73-84 the chain is on the cytoplasmic side; the sequence is FSTTKSLRTPAN. Residues 85 to 110 traverse the membrane as a helical segment; it reads LLVINLAISDFGIMITNTPMMGINLF. The Extracellular segment spans residues 111–124; that stretch reads YETWVLGPLMCDIY. Cysteines 121 and 198 form a disulfide. A helical membrane pass occupies residues 125 to 144; that stretch reads GGLGSAFGCSSILSMCMISL. The Cytoplasmic portion of the chain corresponds to 145-163; the sequence is DRYNVIVKGMAGQPMTIKL. Residues 164–187 form a helical membrane-spanning segment; the sequence is AIMKIALIWFMASIWTLAPVFGWS. Over 188–211 the chain is Extracellular; that stretch reads RYVPEGNLTSCGIDYLERDWNPRS. The helical transmembrane segment at 212–239 threads the bilayer; it reads YLIFYSIFVYYLPLFLICYSYWFIIAAV. Topologically, residues 240-274 are cytoplasmic; it reads SAHEKAMREQAKKMNVKSLRSSEDADKSAEGKLAK. Residues 275–298 form a helical membrane-spanning segment; that stretch reads VALVTISLWFMAWTPYTIINTLGL. Residues 299-305 lie on the Extracellular side of the membrane; sequence FKYEGLT. Residues 306-330 traverse the membrane as a helical segment; it reads PLNTIWGACFAKSAACYNPIVYGIS. Lys317 is modified (N6-(retinylidene)lysine). Topologically, residues 331–371 are cytoplasmic; the sequence is HPKYGIALKEKCPCCVFGKVDDGKASDATSQATNNESETKA.

This sequence belongs to the G-protein coupled receptor 1 family. Opsin subfamily. Post-translationally, phosphorylated on some or all of the serine and threonine residues present in the C-terminal region.

It localises to the cell projection. The protein resides in the rhabdomere membrane. In terms of biological role, visual pigments are the light-absorbing molecules that mediate vision. They consist of an apoprotein, opsin, covalently linked to cis-retinal. This chain is Opsin Rh1 (NINAE), found in Calliphora vicina (Blue blowfly).